The sequence spans 274 residues: Large ribosomal subunit protein uL2 (274 aa).

The segment at 221–274 (RGTAMNPVDHPHGGGEGRNFGKHPVTPWGVQTKGKKTRSNKRTDKFIVRRRSKK) is disordered.

It belongs to the universal ribosomal protein uL2 family. As to quaternary structure, part of the 50S ribosomal subunit. Forms a bridge to the 30S subunit in the 70S ribosome.

Functionally, one of the primary rRNA binding proteins. Required for association of the 30S and 50S subunits to form the 70S ribosome, for tRNA binding and peptide bond formation. It has been suggested to have peptidyltransferase activity; this is somewhat controversial. Makes several contacts with the 16S rRNA in the 70S ribosome. The polypeptide is Large ribosomal subunit protein uL2 (Yersinia pseudotuberculosis serotype O:1b (strain IP 31758)).